We begin with the raw amino-acid sequence, 325 residues long: Lipoyl synthase (325 aa).

[4Fe-4S] cluster is bound by residues Cys-71, Cys-76, Cys-82, Cys-97, Cys-101, Cys-104, and Ser-311. Residues Phe-83–Thr-300 enclose the Radical SAM core domain.

This sequence belongs to the radical SAM superfamily. Lipoyl synthase family. Requires [4Fe-4S] cluster as cofactor.

The protein resides in the cytoplasm. The enzyme catalyses [[Fe-S] cluster scaffold protein carrying a second [4Fe-4S](2+) cluster] + N(6)-octanoyl-L-lysyl-[protein] + 2 oxidized [2Fe-2S]-[ferredoxin] + 2 S-adenosyl-L-methionine + 4 H(+) = [[Fe-S] cluster scaffold protein] + N(6)-[(R)-dihydrolipoyl]-L-lysyl-[protein] + 4 Fe(3+) + 2 hydrogen sulfide + 2 5'-deoxyadenosine + 2 L-methionine + 2 reduced [2Fe-2S]-[ferredoxin]. It functions in the pathway protein modification; protein lipoylation via endogenous pathway; protein N(6)-(lipoyl)lysine from octanoyl-[acyl-carrier-protein]: step 2/2. Functionally, catalyzes the radical-mediated insertion of two sulfur atoms into the C-6 and C-8 positions of the octanoyl moiety bound to the lipoyl domains of lipoate-dependent enzymes, thereby converting the octanoylated domains into lipoylated derivatives. In Methylobacillus flagellatus (strain ATCC 51484 / DSM 6875 / VKM B-1610 / KT), this protein is Lipoyl synthase.